A 970-amino-acid chain; its full sequence is Glycine dehydrogenase (decarboxylating) (970 aa).

Position 723 is an N6-(pyridoxal phosphate)lysine (Lys-723).

Belongs to the GcvP family. In terms of assembly, the glycine cleavage system is composed of four proteins: P, T, L and H. Pyridoxal 5'-phosphate is required as a cofactor.

It carries out the reaction N(6)-[(R)-lipoyl]-L-lysyl-[glycine-cleavage complex H protein] + glycine + H(+) = N(6)-[(R)-S(8)-aminomethyldihydrolipoyl]-L-lysyl-[glycine-cleavage complex H protein] + CO2. In terms of biological role, the glycine cleavage system catalyzes the degradation of glycine. The P protein binds the alpha-amino group of glycine through its pyridoxal phosphate cofactor; CO(2) is released and the remaining methylamine moiety is then transferred to the lipoamide cofactor of the H protein. The sequence is that of Glycine dehydrogenase (decarboxylating) from Burkholderia pseudomallei (strain 1106a).